The primary structure comprises 119 residues: Holo-[acyl-carrier-protein] synthase (119 aa).

The Mg(2+) site is built by Asp8 and Glu58.

The protein belongs to the P-Pant transferase superfamily. AcpS family. Mg(2+) serves as cofactor.

Its subcellular location is the cytoplasm. It catalyses the reaction apo-[ACP] + CoA = holo-[ACP] + adenosine 3',5'-bisphosphate + H(+). In terms of biological role, transfers the 4'-phosphopantetheine moiety from coenzyme A to a Ser of acyl-carrier-protein. This is Holo-[acyl-carrier-protein] synthase from Bacillus cereus (strain B4264).